The following is a 126-amino-acid chain: Large ribosomal subunit protein bL12 (126 aa).

Belongs to the bacterial ribosomal protein bL12 family. In terms of assembly, homodimer. Part of the ribosomal stalk of the 50S ribosomal subunit. Forms a multimeric L10(L12)X complex, where L10 forms an elongated spine to which 2 to 4 L12 dimers bind in a sequential fashion. Binds GTP-bound translation factors.

Its function is as follows. Forms part of the ribosomal stalk which helps the ribosome interact with GTP-bound translation factors. Is thus essential for accurate translation. This is Large ribosomal subunit protein bL12 from Rhizorhabdus wittichii (strain DSM 6014 / CCUG 31198 / JCM 15750 / NBRC 105917 / EY 4224 / RW1) (Sphingomonas wittichii).